A 730-amino-acid polypeptide reads, in one-letter code: MGRRKKMVERVTMLMNEPTKIRNIGIVAHIDHGKTTLSDNLLAGAGMISKELAGRQLFMDSDEEEQERGITIDSSNVSMVHNFDNEDYLINLIDTPGHVDFGGDVTRAMRAVDGAVVVVDAVEGTMPQTETVLRQALREHVRPVLFVNKVDRLINELKVDSQEMQIRLGKVIDHVNKLIKNMNPEKYKEGWRVDAAAGTVAFGSALYNWAISVPMMKKTGVSFKDVYDYCKAGDMKSLAEKCPLHEAVLDMVIHFLPDPIEAQKDRVKVIWHGDENSEIGTSMTHANADGDLAFMVTDISVDPHAGEVATGRLFSGSFSRGMEVFTSGTAKKSRVQQVSIFMGPERLEVDKIPAGNIAAVTGLKEAIVGSTVTTLDGMEPFESIRHVSEPVVTVAVEAKHTKDLPKLIEVLRQVAKEDPTLQITLDEETGEHLMAGMGELHLEVIAHRIERDKNVEITTSKPIVVYRETIKKKIEPVEGKSPNRHNRFYIYVEPLDLEIVSAIKSGEIHMNLPELERRQKLIDLGMEKEEAKGIVGIFNSNIFIDMTKGIQYLNETMELILDGFEEVMRAGPLTREPVANVKCVLVDAKLHEDAIHRGPAQVIPASRQAIQAGMLMADDTLLEPYQKVFVQVPQLLMGGATKELQGRRGIILNMSTEGDLAIIEARVPVAEMFGFAGEIRSATEGRAMWSTEFGGFDIVPTSIQNDIVGQIRERKGLKKELPKASDFLSI.

In terms of domain architecture, tr-type G spans 19–228 (TKIRNIGIVA…TGVSFKDVYD (210 aa)). GTP contacts are provided by residues 28 to 35 (AHIDHGKT), 94 to 98 (DTPGH), and 148 to 151 (NKVD). His596 is subject to Diphthamide.

This sequence belongs to the TRAFAC class translation factor GTPase superfamily. Classic translation factor GTPase family. EF-G/EF-2 subfamily.

It localises to the cytoplasm. Functionally, catalyzes the GTP-dependent ribosomal translocation step during translation elongation. During this step, the ribosome changes from the pre-translocational (PRE) to the post-translocational (POST) state as the newly formed A-site-bound peptidyl-tRNA and P-site-bound deacylated tRNA move to the P and E sites, respectively. Catalyzes the coordinated movement of the two tRNA molecules, the mRNA and conformational changes in the ribosome. The protein is Elongation factor 2 of Methanosarcina barkeri (strain Fusaro / DSM 804).